The primary structure comprises 561 residues: Potassium-transporting ATPase potassium-binding subunit (561 aa).

Helical transmembrane passes span 4 to 24 (IIMQDVFFIVLLLVLAIPLGI), 65 to 85 (AGSVLAFSAIGFVFVMAVLML), 134 to 154 (GLTVQNFVSAATGIAVLFAVI), 177 to 197 (LYILLPLSLVLAILLVSQGVV), 253 to 273 (FTNLIEMLAILLIPVALVVMF), 285 to 305 (AIMTAMMIVFVVGIVAITISE), 380 to 400 (GLYGMIGFIILTVFIAGLLVG), 417 to 437 (MVCLLILVPPLLTLFGTAFAV), 484 to 504 (MVGALMMLFARFIPLIAALYL), and 528 to 548 (FIGLLIGVVVLVGALSFLPAL).

It belongs to the KdpA family. The system is composed of three essential subunits: KdpA, KdpB and KdpC.

It localises to the cell membrane. Functionally, part of the high-affinity ATP-driven potassium transport (or Kdp) system, which catalyzes the hydrolysis of ATP coupled with the electrogenic transport of potassium into the cytoplasm. This subunit binds the extracellular potassium ions and delivers the ions to the membrane domain of KdpB through an intramembrane tunnel. In Listeria welshimeri serovar 6b (strain ATCC 35897 / DSM 20650 / CCUG 15529 / CIP 8149 / NCTC 11857 / SLCC 5334 / V8), this protein is Potassium-transporting ATPase potassium-binding subunit.